The following is a 455-amino-acid chain: Homeobox protein 14 (455 aa).

5 stretches are compositionally biased toward low complexity: residues 1–16 (MNHN…KNNS), 24–39 (SSRS…SSSG), 81–118 (TTTT…ESPN), 179–239 (ESPN…SPSF), and 263–294 (NNNN…TNNN). Disordered stretches follow at residues 1 to 53 (MNHN…SSIN), 67 to 121 (KQTK…NCNK), 178 to 239 (SESP…SPSF), and 258 to 296 (TLLS…NNGD). DNA-binding regions (homeobox) lie at residues 310–369 (KSGQ…SKSG) and 372–431 (SYAK…NKLS). Positions 431-455 (SSKANQDNDNNNNNENNDDSYSDEG) are disordered. The span at 435-445 (NQDNDNNNNNE) shows a compositional bias: low complexity. Positions 446–455 (NNDDSYSDEG) are enriched in acidic residues.

The protein localises to the nucleus. Functionally, putative transcription factor. This is Homeobox protein 14 (hbx14) from Dictyostelium discoideum (Social amoeba).